Reading from the N-terminus, the 1203-residue chain is DNA-directed RNA polymerase subunit beta' (1203 aa).

Zn(2+)-binding residues include cysteine 60, cysteine 62, cysteine 75, and cysteine 78. Positions 449, 451, and 453 each coordinate Mg(2+). Zn(2+) contacts are provided by cysteine 818, cysteine 892, cysteine 899, and cysteine 902.

The protein belongs to the RNA polymerase beta' chain family. In terms of assembly, the RNAP catalytic core consists of 2 alpha, 1 beta, 1 beta' and 1 omega subunit. When a sigma factor is associated with the core the holoenzyme is formed, which can initiate transcription. Requires Mg(2+) as cofactor. Zn(2+) serves as cofactor.

The enzyme catalyses RNA(n) + a ribonucleoside 5'-triphosphate = RNA(n+1) + diphosphate. Functionally, DNA-dependent RNA polymerase catalyzes the transcription of DNA into RNA using the four ribonucleoside triphosphates as substrates. This is DNA-directed RNA polymerase subunit beta' from Bacillus cereus (strain ATCC 14579 / DSM 31 / CCUG 7414 / JCM 2152 / NBRC 15305 / NCIMB 9373 / NCTC 2599 / NRRL B-3711).